Here is a 385-residue protein sequence, read N- to C-terminus: Probable splicing factor YJU2B (385 aa).

Residues 1-26 form a disordered region; it reads MGERKGQNKYYPPDFNPEKHGSLNRY. Position 40 is a phosphoserine (serine 40). Positions 182 to 214 form a coiled coil; it reads LNSMLRRHFREKKKAMQEEEEKDQALQAKASLA. The disordered stretch occupies residues 257–385; it reads PSAQGPSASS…VADYSDSESE (129 aa). The segment covering 258–271 has biased composition (low complexity); it reads SAQGPSASSSKASS. Serine 306 carries the phosphoserine modification. Residues 359-373 are compositionally biased toward polar residues; it reads GSSQEDLLNPNTPNA.

This sequence belongs to the CWC16 family.

Its subcellular location is the nucleus. In terms of biological role, may be involved in mRNA splicing. The chain is Probable splicing factor YJU2B (Yju2b) from Mus musculus (Mouse).